The following is a 258-amino-acid chain: Thiazole synthase (258 aa).

The Schiff-base intermediate with DXP role is filled by lysine 100. 1-deoxy-D-xylulose 5-phosphate contacts are provided by residues glycine 161, 187–188, and 209–210; these read AG and NT.

This sequence belongs to the ThiG family. As to quaternary structure, homotetramer. Forms heterodimers with either ThiH or ThiS.

Its subcellular location is the cytoplasm. It catalyses the reaction [ThiS sulfur-carrier protein]-C-terminal-Gly-aminoethanethioate + 2-iminoacetate + 1-deoxy-D-xylulose 5-phosphate = [ThiS sulfur-carrier protein]-C-terminal Gly-Gly + 2-[(2R,5Z)-2-carboxy-4-methylthiazol-5(2H)-ylidene]ethyl phosphate + 2 H2O + H(+). It functions in the pathway cofactor biosynthesis; thiamine diphosphate biosynthesis. Its function is as follows. Catalyzes the rearrangement of 1-deoxy-D-xylulose 5-phosphate (DXP) to produce the thiazole phosphate moiety of thiamine. Sulfur is provided by the thiocarboxylate moiety of the carrier protein ThiS. In vitro, sulfur can be provided by H(2)S. The chain is Thiazole synthase from Campylobacter jejuni subsp. jejuni serotype O:23/36 (strain 81-176).